The primary structure comprises 195 residues: Putative nucleotidase BH1399 (195 aa).

This sequence belongs to the 5'(3')-deoxyribonucleotidase family.

The sequence is that of Putative nucleotidase BH1399 from Halalkalibacterium halodurans (strain ATCC BAA-125 / DSM 18197 / FERM 7344 / JCM 9153 / C-125) (Bacillus halodurans).